A 463-amino-acid polypeptide reads, in one-letter code: MAATRTETDTFGPIDVPADRYWGAQTQRSLQNFRIGGERMPLPLVHALGVVKRAAAETNIALGKLDPVLGQVIAVAASEVIEGKLDDHFPLVVWQTGSGTQSNMNANEVISNRAIELLGGEMGSKKPIHPNDHVNMSQSSNDSFPTAIHIATAVETVNRLYPALEHLTKALKVKEEAFKDIIKIGRTHTQDATPVTLGQEFSGYRAALEYARHRLEQSLADVFLLAQGGTAVGTGLNAPVGFDKGFAEAVSEITGLSFKTAPNKFEALASHGAVLNFHGSLNALAADLFKIANDIRFLGSGPRSGLGELSLPENEPGSSIMPGKVNPTQAEAMTMVATQVFGNQTAVTVAASQGHFELNVFKPVIAYNVLQSIRLLSDTMVSFADHCVEGIEPNTARIKELLERSLMLVTALAPAIGYDNAARIAKTAHKNGTTLREEALASGLVSEEDYDRLVRAERMIAPQ.

Substrate is bound by residues 98–100, 129–132, 139–141, and Thr187; these read SGT, HPND, and SSN. The active-site Proton donor/acceptor is the His188. The active site involves Ser318. Residues Ser319 and 324–326 contribute to the substrate site; that span reads KVN.

The protein belongs to the class-II fumarase/aspartase family. Fumarase subfamily. Homotetramer.

Its subcellular location is the cytoplasm. The enzyme catalyses (S)-malate = fumarate + H2O. Its pathway is carbohydrate metabolism; tricarboxylic acid cycle; (S)-malate from fumarate: step 1/1. Functionally, involved in the TCA cycle. Catalyzes the stereospecific interconversion of fumarate to L-malate. This Brucella melitensis biotype 1 (strain ATCC 23456 / CCUG 17765 / NCTC 10094 / 16M) protein is Fumarate hydratase class II.